The following is a 422-amino-acid chain: GPI mannosyltransferase 1 (422 aa).

8 consecutive transmembrane segments (helical) span residues 10-30 (TTPL…YGIY), 82-102 (FPAF…WLIL), 162-182 (IILG…PAIV), 216-236 (LKFG…MFAI), 282-302 (IESF…PLAL), 327-347 (SQYF…SSFL), 352-372 (LGIF…QQGY), and 385-405 (GLWL…GVII).

Belongs to the PIGM family.

The protein localises to the endoplasmic reticulum membrane. Its pathway is glycolipid biosynthesis; glycosylphosphatidylinositol-anchor biosynthesis. In terms of biological role, mannosyltransferase involved in glycosylphosphatidylinositol-anchor biosynthesis. Transfers the first alpha-1,4-mannose to GlcN-acyl-PI during GPI precursor assembly. Required for cell wall integrity. The sequence is that of GPI mannosyltransferase 1 (GPI14) from Gibberella zeae (strain ATCC MYA-4620 / CBS 123657 / FGSC 9075 / NRRL 31084 / PH-1) (Wheat head blight fungus).